Here is a 405-residue protein sequence, read N- to C-terminus: Maintenance of mitochondrial morphology protein 1 (405 aa).

Over 1–86 the chain is Lumenal; sequence MQVLNFYVNP…TGSTKSFTQG (86 aa). The chain crosses the membrane as a helical span at residues 87–107; it reads LIIGQLSVIILLGIFIKFFVF. At 108–405 the chain is on the cytoplasmic side; sequence ADSSTTSSTS…QPVSTTESDH (298 aa). Residues 166 to 385 enclose the SMP-LTD domain; the sequence is APESLDWFNV…EPRFQVVKLP (220 aa). A disordered region spans residues 303–324; that stretch reads SEPRVAMDSPQSTRDDNSEEPN.

It belongs to the MMM1 family. Homodimer. Component of the ER-mitochondria encounter structure (ERMES) or MDM complex, composed of MMM1, MDM10, MDM12 and MDM34. An MMM1 homodimer associates with one molecule of MDM12 on each side in a pairwise head-to-tail manner, and the SMP-LTD domains of MMM1 and MDM12 generate a continuous hydrophobic tunnel for phospholipid trafficking.

Its subcellular location is the endoplasmic reticulum membrane. Its function is as follows. Component of the ERMES/MDM complex, which serves as a molecular tether to connect the endoplasmic reticulum (ER) and mitochondria. Components of this complex are involved in the control of mitochondrial shape and protein biogenesis, and function in nonvesicular lipid trafficking between the ER and mitochondria. The MDM12-MMM1 subcomplex functions in the major beta-barrel assembly pathway that is responsible for biogenesis of all outer membrane beta-barrel proteins, and acts in a late step after the SAM complex. The MDM10-MDM12-MMM1 subcomplex further acts in the TOM40-specific pathway after the action of the MDM12-MMM1 complex. Essential for establishing and maintaining the structure of mitochondria and maintenance of mtDNA nucleoids. The protein is Maintenance of mitochondrial morphology protein 1 of Meyerozyma guilliermondii (strain ATCC 6260 / CBS 566 / DSM 6381 / JCM 1539 / NBRC 10279 / NRRL Y-324) (Yeast).